The sequence spans 1359 residues: Transcriptional regulator ATRX homolog (1359 aa).

A disordered region spans residues 1–402; that stretch reads MRVGVSESED…RAEKERRKRL (402 aa). Residues 11–49 are compositionally biased toward basic and acidic residues; it reads SDGHVIEDEDLEMARQIENERKEKRAQKLKEKREREGKP. A compositionally biased stretch (basic residues) spans 50–61; the sequence is PPKKRPAKKRKA. Residues 64–73 show a composition bias toward acidic residues; it reads SEEDDDDEEE. Basic residues-rich tracts occupy residues 77–86, 103–123, 139–149, 165–177, 194–204, and 219–229; these read KSSKKSRKRA, KSKS…KKRT, KSKKKSKKTKK, VKKS…KSVK, KKSKKGLKKKA, and KKSKKKSKKVV. Acidic residues predominate over residues 257-271; that stretch reads ESSESEKSDEEEEEK. Residues 321-336 show a composition bias toward basic and acidic residues; it reads KDQKSESEASDVEEKV. Residues 347–357 show a composition bias toward low complexity; sequence SESGSDSSEGS. Over residues 362–376 the composition is skewed to basic residues; that stretch reads RKSKKKEKPEKKKKG. Positions 383–397 are enriched in basic and acidic residues; that stretch reads KLQKETIDAERAEKE. A Helicase ATP-binding domain is found at 483-685; it reads DRLDTEGSGG…HCMVNFVKPG (203 aa). 496–503 is a binding site for ATP; that stretch reads HCMGLGKT. The DEAH box signature appears at 636-639; that stretch reads DEAH. The disordered stretch occupies residues 809–891; that stretch reads RVMREDAEEE…NSDDEDEEDG (83 aa). Over residues 814 to 832 the composition is skewed to acidic residues; sequence DAEEEADFIDDGDGSESES. The span at 833-847 shows a compositional bias: low complexity; the sequence is EGSFKSGSESDSGKS. The Helicase C-terminal domain occupies 951–1134; it reads LLVEIIKKCE…EAQIQRHYLG (184 aa).

This sequence belongs to the SNF2/RAD54 helicase family.

The protein resides in the nucleus. The catalysed reaction is ATP + H2O = ADP + phosphate + H(+). Functionally, required for embryonic development and gonadogenesis. Also, functions redundantly with the transcriptional repressor lin-35 to regulate somatic gonad development. The polypeptide is Transcriptional regulator ATRX homolog (Caenorhabditis elegans).